The following is a 143-amino-acid chain: Nucleoside diphosphate kinase (143 aa).

ATP-binding residues include lysine 11, phenylalanine 59, arginine 87, threonine 93, arginine 104, and asparagine 114. The active-site Pros-phosphohistidine intermediate is the histidine 117.

Belongs to the NDK family. As to quaternary structure, homotetramer. Mg(2+) serves as cofactor.

It localises to the cytoplasm. It carries out the reaction a 2'-deoxyribonucleoside 5'-diphosphate + ATP = a 2'-deoxyribonucleoside 5'-triphosphate + ADP. It catalyses the reaction a ribonucleoside 5'-diphosphate + ATP = a ribonucleoside 5'-triphosphate + ADP. Its function is as follows. Major role in the synthesis of nucleoside triphosphates other than ATP. The ATP gamma phosphate is transferred to the NDP beta phosphate via a ping-pong mechanism, using a phosphorylated active-site intermediate. The polypeptide is Nucleoside diphosphate kinase (Escherichia coli O81 (strain ED1a)).